The sequence spans 402 residues: 4-hydroxy-3-methylbut-2-enyl diphosphate reductase (402 aa).

C66 is a binding site for [4Fe-4S] cluster. A (2E)-4-hydroxy-3-methylbut-2-enyl diphosphate-binding site is contributed by H96. Position 96 (H96) interacts with dimethylallyl diphosphate. Position 96 (H96) interacts with isopentenyl diphosphate. C157 contributes to the [4Fe-4S] cluster binding site. (2E)-4-hydroxy-3-methylbut-2-enyl diphosphate is bound at residue H185. H185 contacts dimethylallyl diphosphate. H185 contributes to the isopentenyl diphosphate binding site. E187 functions as the Proton donor in the catalytic mechanism. Position 250 (T250) interacts with (2E)-4-hydroxy-3-methylbut-2-enyl diphosphate. C288 contacts [4Fe-4S] cluster. 4 residues coordinate (2E)-4-hydroxy-3-methylbut-2-enyl diphosphate: S317, S318, N319, and S379. Residues S317, S318, N319, and S379 each coordinate dimethylallyl diphosphate. Isopentenyl diphosphate-binding residues include S317, S318, N319, and S379.

It belongs to the IspH family. [4Fe-4S] cluster is required as a cofactor.

The catalysed reaction is isopentenyl diphosphate + 2 oxidized [2Fe-2S]-[ferredoxin] + H2O = (2E)-4-hydroxy-3-methylbut-2-enyl diphosphate + 2 reduced [2Fe-2S]-[ferredoxin] + 2 H(+). The enzyme catalyses dimethylallyl diphosphate + 2 oxidized [2Fe-2S]-[ferredoxin] + H2O = (2E)-4-hydroxy-3-methylbut-2-enyl diphosphate + 2 reduced [2Fe-2S]-[ferredoxin] + 2 H(+). Its pathway is isoprenoid biosynthesis; dimethylallyl diphosphate biosynthesis; dimethylallyl diphosphate from (2E)-4-hydroxy-3-methylbutenyl diphosphate: step 1/1. It participates in isoprenoid biosynthesis; isopentenyl diphosphate biosynthesis via DXP pathway; isopentenyl diphosphate from 1-deoxy-D-xylulose 5-phosphate: step 6/6. Catalyzes the conversion of 1-hydroxy-2-methyl-2-(E)-butenyl 4-diphosphate (HMBPP) into a mixture of isopentenyl diphosphate (IPP) and dimethylallyl diphosphate (DMAPP). Acts in the terminal step of the DOXP/MEP pathway for isoprenoid precursor biosynthesis. The protein is 4-hydroxy-3-methylbut-2-enyl diphosphate reductase of Microcystis aeruginosa (strain NIES-843 / IAM M-2473).